The primary structure comprises 464 residues: Argininosuccinate lyase (464 aa).

The residue at position 2 (Ala2) is an N-acetylalanine. N6-acetyllysine is present on Lys7. Ser27 provides a ligand contact to 2-(N(omega)-L-arginino)succinate. An N6-acetyllysine modification is found at Lys69. 2 residues coordinate 2-(N(omega)-L-arginino)succinate: Asn114 and Thr159. His160 (proton acceptor) is an active-site residue. Ser281 acts as the Proton donor in catalysis. Lys288 is modified (N6-acetyllysine). 2-(N(omega)-L-arginino)succinate contacts are provided by Asn289, Tyr321, Gln326, and Lys329.

It belongs to the lyase 1 family. Argininosuccinate lyase subfamily. In terms of assembly, homotetramer. Forms tissue-specific complexes with ASS1, SLC7A1, HSP90AA1 and nitric oxide synthase NOS1, NOS2 or NOS3; the complex maintenance is independent of ASL catalytic function. In terms of processing, acetylation modifies enzyme activity in response to alterations of extracellular nutrient availability. Acetylation increased with trichostin A (TSA) or with nicotinamide (NAM). Glucose increases acetylation by about a factor of 3 with decreasing enzyme activity. Acetylation on Lys-288 is decreased on the addition of extra amino acids resulting in activation of enzyme activity. In terms of tissue distribution, expressed in lung and brain (at protein level).

It catalyses the reaction 2-(N(omega)-L-arginino)succinate = fumarate + L-arginine. The protein operates within amino-acid biosynthesis; L-arginine biosynthesis; L-arginine from L-ornithine and carbamoyl phosphate: step 3/3. It participates in nitrogen metabolism; urea cycle; L-arginine and fumarate from (N(omega)-L-arginino)succinate: step 1/1. Enzyme activity is regulated by acetylation. Catalyzes the reversible cleavage of L-argininosuccinate to fumarate and L-arginine, an intermediate step reaction in the urea cycle mostly providing for hepatic nitrogen detoxification into excretable urea as well as de novo L-arginine synthesis in nonhepatic tissues. Essential regulator of intracellular and extracellular L-arginine pools. As part of citrulline-nitric oxide cycle, forms tissue-specific multiprotein complexes with argininosuccinate synthase ASS1, transport protein SLC7A1 and nitric oxide synthase NOS1, NOS2 or NOS3, allowing for cell-autonomous L-arginine synthesis while channeling extracellular L-arginine to nitric oxide synthesis pathway. The sequence is that of Argininosuccinate lyase (Asl) from Mus musculus (Mouse).